We begin with the raw amino-acid sequence, 490 residues long: Protoporphyrinogen oxidase (490 aa).

Residues 7–12 (GGGIAG), 32–33 (EK), tryptophan 40, 61–64 (GPRT), and 466–468 (VSI) each bind FAD.

This sequence belongs to the protoporphyrinogen/coproporphyrinogen oxidase family. Protoporphyrinogen oxidase subfamily. It depends on FAD as a cofactor.

It is found in the mitochondrion. The enzyme catalyses protoporphyrinogen IX + 3 O2 = protoporphyrin IX + 3 H2O2. The protein operates within porphyrin-containing compound metabolism; protoporphyrin-IX biosynthesis; protoporphyrin-IX from protoporphyrinogen-IX: step 1/1. Functionally, catalyzes the 6-electron oxidation of protoporphyrinogen-IX to form protoporphyrin-IX. This Schizosaccharomyces pombe (strain 972 / ATCC 24843) (Fission yeast) protein is Protoporphyrinogen oxidase (hem14).